The primary structure comprises 467 residues: Serine/threonine-protein kinase AFC1 (467 aa).

One can recognise a Protein kinase domain in the interval 115 to 443; sequence YQILSKMGEG…AREALNHPFF (329 aa). ATP-binding positions include 121 to 129 and lysine 144; that span reads MGEGTFGQV. The active-site Proton acceptor is the aspartate 240. Positions 447 to 467 are disordered; it reads REQSIPPFNPNPHPFLYNQKN.

It belongs to the protein kinase superfamily. CMGC Ser/Thr protein kinase family. Lammer subfamily.

It carries out the reaction L-seryl-[protein] + ATP = O-phospho-L-seryl-[protein] + ADP + H(+). The catalysed reaction is L-threonyl-[protein] + ATP = O-phospho-L-threonyl-[protein] + ADP + H(+). It catalyses the reaction L-tyrosyl-[protein] + ATP = O-phospho-L-tyrosyl-[protein] + ADP + H(+). Functionally, activator of yeast transcription factor, STE12. The chain is Serine/threonine-protein kinase AFC1 (AFC1) from Arabidopsis thaliana (Mouse-ear cress).